Consider the following 191-residue polypeptide: Peptidyl-tRNA hydrolase (191 aa).

Tyrosine 17 provides a ligand contact to tRNA. Catalysis depends on histidine 22, which acts as the Proton acceptor. The tRNA site is built by tyrosine 68, asparagine 70, and asparagine 116.

The protein belongs to the PTH family. Monomer.

It localises to the cytoplasm. The catalysed reaction is an N-acyl-L-alpha-aminoacyl-tRNA + H2O = an N-acyl-L-amino acid + a tRNA + H(+). In terms of biological role, hydrolyzes ribosome-free peptidyl-tRNAs (with 1 or more amino acids incorporated), which drop off the ribosome during protein synthesis, or as a result of ribosome stalling. Catalyzes the release of premature peptidyl moieties from peptidyl-tRNA molecules trapped in stalled 50S ribosomal subunits, and thus maintains levels of free tRNAs and 50S ribosomes. The chain is Peptidyl-tRNA hydrolase from Francisella tularensis subsp. mediasiatica (strain FSC147).